We begin with the raw amino-acid sequence, 183 residues long: ATP-dependent protease subunit HslV (183 aa).

Thr-13 is an active-site residue. 3 residues coordinate Na(+): Gly-168, Cys-171, and Thr-174.

The protein belongs to the peptidase T1B family. HslV subfamily. As to quaternary structure, a double ring-shaped homohexamer of HslV is capped on each side by a ring-shaped HslU homohexamer. The assembly of the HslU/HslV complex is dependent on binding of ATP.

Its subcellular location is the cytoplasm. It carries out the reaction ATP-dependent cleavage of peptide bonds with broad specificity.. With respect to regulation, allosterically activated by HslU binding. Its function is as follows. Protease subunit of a proteasome-like degradation complex believed to be a general protein degrading machinery. In Xanthomonas campestris pv. campestris (strain ATCC 33913 / DSM 3586 / NCPPB 528 / LMG 568 / P 25), this protein is ATP-dependent protease subunit HslV.